The primary structure comprises 407 residues: Carbamoyl phosphate synthase small chain (407 aa).

The CPSase stretch occupies residues 1–205 (MTETTSKTAP…LADGYGEQDT (205 aa)). Serine 60, glycine 257, and glycine 259 together coordinate L-glutamine. The 189-residue stretch at 209–397 (HVVALDFGVK…INLIREKKGE (189 aa)) folds into the Glutamine amidotransferase type-1 domain. Cysteine 286 functions as the Nucleophile in the catalytic mechanism. L-glutamine-binding residues include leucine 287, glutamine 290, asparagine 328, glycine 330, and phenylalanine 331. Catalysis depends on residues histidine 370 and glutamate 372.

This sequence belongs to the CarA family. Composed of two chains; the small (or glutamine) chain promotes the hydrolysis of glutamine to ammonia, which is used by the large (or ammonia) chain to synthesize carbamoyl phosphate. Tetramer of heterodimers (alpha,beta)4.

It catalyses the reaction hydrogencarbonate + L-glutamine + 2 ATP + H2O = carbamoyl phosphate + L-glutamate + 2 ADP + phosphate + 2 H(+). The enzyme catalyses L-glutamine + H2O = L-glutamate + NH4(+). Its pathway is amino-acid biosynthesis; L-arginine biosynthesis; carbamoyl phosphate from bicarbonate: step 1/1. It participates in pyrimidine metabolism; UMP biosynthesis via de novo pathway; (S)-dihydroorotate from bicarbonate: step 1/3. Small subunit of the glutamine-dependent carbamoyl phosphate synthetase (CPSase). CPSase catalyzes the formation of carbamoyl phosphate from the ammonia moiety of glutamine, carbonate, and phosphate donated by ATP, constituting the first step of 2 biosynthetic pathways, one leading to arginine and/or urea and the other to pyrimidine nucleotides. The small subunit (glutamine amidotransferase) binds and cleaves glutamine to supply the large subunit with the substrate ammonia. The sequence is that of Carbamoyl phosphate synthase small chain from Brucella anthropi (strain ATCC 49188 / DSM 6882 / CCUG 24695 / JCM 21032 / LMG 3331 / NBRC 15819 / NCTC 12168 / Alc 37) (Ochrobactrum anthropi).